The chain runs to 159 residues: Transcription elongation factor GreA (159 aa).

The stretch at 1 to 76 (MAEEKEVVLT…SLEKTLKKAR (76 aa)) forms a coiled coil.

This sequence belongs to the GreA/GreB family.

In terms of biological role, necessary for efficient RNA polymerase transcription elongation past template-encoded arresting sites. The arresting sites in DNA have the property of trapping a certain fraction of elongating RNA polymerases that pass through, resulting in locked ternary complexes. Cleavage of the nascent transcript by cleavage factors such as GreA or GreB allows the resumption of elongation from the new 3'terminus. GreA releases sequences of 2 to 3 nucleotides. This is Transcription elongation factor GreA from Syntrophomonas wolfei subsp. wolfei (strain DSM 2245B / Goettingen).